The following is a 121-amino-acid chain: Ribosome-binding factor A (121 aa).

It belongs to the RbfA family. Monomer. Binds 30S ribosomal subunits, but not 50S ribosomal subunits or 70S ribosomes.

The protein localises to the cytoplasm. In terms of biological role, one of several proteins that assist in the late maturation steps of the functional core of the 30S ribosomal subunit. Associates with free 30S ribosomal subunits (but not with 30S subunits that are part of 70S ribosomes or polysomes). Required for efficient processing of 16S rRNA. May interact with the 5'-terminal helix region of 16S rRNA. The protein is Ribosome-binding factor A of Brevibacillus brevis (strain 47 / JCM 6285 / NBRC 100599).